The chain runs to 247 residues: Triosephosphate isomerase (247 aa).

The substrate site is built by asparagine 10 and lysine 12. Histidine 94 functions as the Electrophile in the catalytic mechanism. Catalysis depends on glutamate 164, which acts as the Proton acceptor.

This sequence belongs to the triosephosphate isomerase family. In terms of assembly, homodimer.

Its subcellular location is the cytoplasm. It carries out the reaction D-glyceraldehyde 3-phosphate = dihydroxyacetone phosphate. It catalyses the reaction dihydroxyacetone phosphate = methylglyoxal + phosphate. The protein operates within carbohydrate biosynthesis; gluconeogenesis. Its pathway is carbohydrate degradation; glycolysis; D-glyceraldehyde 3-phosphate from glycerone phosphate: step 1/1. Functionally, triosephosphate isomerase is an extremely efficient metabolic enzyme that catalyzes the interconversion between dihydroxyacetone phosphate (DHAP) and D-glyceraldehyde-3-phosphate (G3P) in glycolysis and gluconeogenesis. In terms of biological role, it is also responsible for the non-negligible production of methylglyoxal a reactive cytotoxic side-product that modifies and can alter proteins, DNA and lipids. This chain is Triosephosphate isomerase (tpi-1), found in Caenorhabditis elegans.